The following is a 352-amino-acid chain: Nicotinate-nucleotide--dimethylbenzimidazole phosphoribosyltransferase (352 aa).

The active-site Proton acceptor is Glu318.

It belongs to the CobT family.

It catalyses the reaction 5,6-dimethylbenzimidazole + nicotinate beta-D-ribonucleotide = alpha-ribazole 5'-phosphate + nicotinate + H(+). The protein operates within nucleoside biosynthesis; alpha-ribazole biosynthesis; alpha-ribazole from 5,6-dimethylbenzimidazole: step 1/2. Catalyzes the synthesis of alpha-ribazole-5'-phosphate from nicotinate mononucleotide (NAMN) and 5,6-dimethylbenzimidazole (DMB). In Geobacter sulfurreducens (strain ATCC 51573 / DSM 12127 / PCA), this protein is Nicotinate-nucleotide--dimethylbenzimidazole phosphoribosyltransferase.